Consider the following 581-residue polypeptide: Metal transporter Nramp7.1 (581 aa).

2 N-linked (GlcNAc...) asparagine glycosylation sites follow: Asn-11 and Asn-19. 7 helical membrane-spanning segments follow: residues 57–77 (FLSY…PGNL), 90–110 (ELLW…SLAA), 146–166 (YCLW…EGII), 181–201 (LLIG…WVGV), 224–244 (LLIA…MSYV), 270–290 (IALL…ALVL), and 307–327 (YFLI…LAVI). Asn-338 carries N-linked (GlcNAc...) asparagine glycosylation. 5 helical membrane-spanning segments follow: residues 370-390 (IYAI…TYAG), 409-429 (LVTR…GGSS), 434-454 (LIII…FALI), 473-493 (IYII…NIYY), and 513-533 (VFIG…VIYL). The tract at residues 551–581 (PQQQANMENGLGPEMERVPYREDLADIPLPE) is disordered. Basic and acidic residues predominate over residues 564 to 574 (EMERVPYREDL).

It belongs to the NRAMP (TC 2.A.55) family.

The protein resides in the membrane. Probable divalent metal transporter. This Populus trichocarpa (Western balsam poplar) protein is Metal transporter Nramp7.1.